The primary structure comprises 192 residues: UPF0149 protein YgfB (192 aa).

The protein belongs to the UPF0149 family.

The sequence is that of UPF0149 protein YgfB from Salmonella typhi.